Reading from the N-terminus, the 397-residue chain is Trans-2-enoyl-CoA reductase [NADH] (397 aa).

NAD(+)-binding positions include 53–58 (GCSNGY), 79–80 (FE), 116–117 (DA), and 144–145 (LA). Tyrosine 230 contributes to the substrate binding site. Tyrosine 240 acts as the Proton donor in catalysis. Residues lysine 249 and 276–278 (LVT) each bind NAD(+).

This sequence belongs to the TER reductase family. In terms of assembly, monomer.

It carries out the reaction a 2,3-saturated acyl-CoA + NAD(+) = a (2E)-enoyl-CoA + NADH + H(+). Its pathway is lipid metabolism; fatty acid biosynthesis. With respect to regulation, inhibited by lauroyl-CoA. Functionally, involved in the fatty acid synthesis (FAS II). Catalyzes the reduction of the carbon-carbon double bond of crotonyl-CoA to yield butyryl-CoA. In vitro it can also use hexenoyl-CoA and dodecenoyl-CoA as substrates. The polypeptide is Trans-2-enoyl-CoA reductase [NADH] (Treponema denticola (strain ATCC 35405 / DSM 14222 / CIP 103919 / JCM 8153 / KCTC 15104)).